A 544-amino-acid chain; its full sequence is Tyrosyl-DNA phosphodiesterase 1 (544 aa).

The active-site Nucleophile is the histidine 182. Lysine 184 is a binding site for substrate. Positions 312 to 316 (SIGTS) are interaction with DNA. The active-site Proton donor/acceptor is histidine 432. Residue lysine 434 coordinates substrate.

Belongs to the tyrosyl-DNA phosphodiesterase family.

The protein localises to the nucleus. Its function is as follows. DNA repair enzyme that can remove a variety of covalent adducts from DNA through hydrolysis of a 3'-phosphodiester bond, giving rise to DNA with a free 3' phosphate. Catalyzes the hydrolysis of dead-end complexes between DNA and the topoisomerase I active site tyrosine residue. Hydrolyzes 3'-phosphoglycolates on protruding 3' ends on DNA double-strand breaks due to DNA damage by radiation and free radicals. Also cleaves 5' phosphotyrosyl adducts resulting from dead-end complexes between DNA and the active site tyrosine of topoisomerase II. Contributes to DNA repair after radiation damage. Acts on blunt-ended double-strand DNA breaks and on single-stranded DNA. May have low 3'exonuclease activity and may be able to remove a single nucleoside from the 3'end of DNA and RNA molecules with 3'hydroxyl groups. Has no exonuclease activity towards DNA or RNA with a 3'phosphate. The protein is Tyrosyl-DNA phosphodiesterase 1 (TDP1) of Saccharomyces cerevisiae (strain ATCC 204508 / S288c) (Baker's yeast).